The primary structure comprises 217 residues: Large ribosomal subunit protein bL25 (217 aa).

The disordered stretch occupies residues 185-217 (TKETVEDEEAEEAAAEGAEETGETGETEEGGDE). The segment covering 189 to 217 (VEDEEAEEAAAEGAEETGETGETEEGGDE) has biased composition (acidic residues).

The protein belongs to the bacterial ribosomal protein bL25 family. CTC subfamily. In terms of assembly, part of the 50S ribosomal subunit; part of the 5S rRNA/L5/L18/L25 subcomplex. Contacts the 5S rRNA. Binds to the 5S rRNA independently of L5 and L18.

This is one of the proteins that binds to the 5S RNA in the ribosome where it forms part of the central protuberance. This chain is Large ribosomal subunit protein bL25, found in Desulfosudis oleivorans (strain DSM 6200 / JCM 39069 / Hxd3) (Desulfococcus oleovorans).